The chain runs to 432 residues: Probable anion transporter 5 (432 aa).

The first 23 residues, Met1–Cys23, serve as a signal peptide directing secretion. Transmembrane regions (helical) follow at residues Thr50–Ala70, Val78–Asn98, Gly101–Ile121, Ile140–Val160, Gly164–Ile184, Leu229–Met249, Val273–Ile293, Lys305–Phe325, Val331–Val351, Tyr360–Val380, and Val405–Ser425.

This sequence belongs to the major facilitator superfamily. Sodium/anion cotransporter (TC 2.A.1.14) family. As to expression, ubiquitous.

Its subcellular location is the golgi apparatus membrane. Inorganic phosphate and probable anion transporter. The chain is Probable anion transporter 5 (ANTR5) from Arabidopsis thaliana (Mouse-ear cress).